The chain runs to 618 residues: 1-aminocyclopropane-1-carboxylate synthase-like protein 1 (618 aa).

Low complexity predominate over residues 11-26 (QGTQTPAAQTTCAPST). The tract at residues 11 to 54 (QGTQTPAAQTTCAPSTMSSSSRPPLETLQAQSVSADETPGSALP) is disordered. Polar residues predominate over residues 27-45 (MSSSSRPPLETLQAQSVSA). Residue E122 participates in substrate binding. K340 is subject to N6-(pyridoxal phosphate)lysine.

Belongs to the class-I pyridoxal-phosphate-dependent aminotransferase family.

This Takifugu rubripes (Japanese pufferfish) protein is 1-aminocyclopropane-1-carboxylate synthase-like protein 1 (accs).